The following is a 183-amino-acid chain: Potassium-transporting ATPase KdpC subunit (183 aa).

The helical transmembrane segment at 11 to 31 (LILLLAVVTGALYPLAVTGVA) threads the bilayer.

It belongs to the KdpC family. In terms of assembly, the system is composed of three essential subunits: KdpA, KdpB and KdpC.

Its subcellular location is the cell inner membrane. Functionally, part of the high-affinity ATP-driven potassium transport (or Kdp) system, which catalyzes the hydrolysis of ATP coupled with the electrogenic transport of potassium into the cytoplasm. This subunit acts as a catalytic chaperone that increases the ATP-binding affinity of the ATP-hydrolyzing subunit KdpB by the formation of a transient KdpB/KdpC/ATP ternary complex. This chain is Potassium-transporting ATPase KdpC subunit, found in Pseudomonas putida (strain W619).